Here is a 463-residue protein sequence, read N- to C-terminus: Siroheme synthase (463 aa).

A precorrin-2 dehydrogenase /sirohydrochlorin ferrochelatase region spans residues 1–203 (MDYLPLFHKL…GQGAEAERLL (203 aa)). NAD(+) contacts are provided by residues 22–23 (EI) and 43–44 (PE). Position 128 is a phosphoserine (serine 128). Residues 216 to 463 (GEVYLVGAGP…LAWFEGAQNS (248 aa)) form a uroporphyrinogen-III C-methyltransferase region. Proline 225 is a binding site for S-adenosyl-L-methionine. Aspartate 248 functions as the Proton acceptor in the catalytic mechanism. Catalysis depends on lysine 270, which acts as the Proton donor. S-adenosyl-L-methionine-binding positions include 301-303 (GGD), isoleucine 306, 331-332 (TA), methionine 383, and glycine 412.

The protein in the N-terminal section; belongs to the precorrin-2 dehydrogenase / sirohydrochlorin ferrochelatase family. In the C-terminal section; belongs to the precorrin methyltransferase family.

It catalyses the reaction uroporphyrinogen III + 2 S-adenosyl-L-methionine = precorrin-2 + 2 S-adenosyl-L-homocysteine + H(+). The catalysed reaction is precorrin-2 + NAD(+) = sirohydrochlorin + NADH + 2 H(+). The enzyme catalyses siroheme + 2 H(+) = sirohydrochlorin + Fe(2+). Its pathway is cofactor biosynthesis; adenosylcobalamin biosynthesis; precorrin-2 from uroporphyrinogen III: step 1/1. It functions in the pathway cofactor biosynthesis; adenosylcobalamin biosynthesis; sirohydrochlorin from precorrin-2: step 1/1. The protein operates within porphyrin-containing compound metabolism; siroheme biosynthesis; precorrin-2 from uroporphyrinogen III: step 1/1. It participates in porphyrin-containing compound metabolism; siroheme biosynthesis; siroheme from sirohydrochlorin: step 1/1. Its pathway is porphyrin-containing compound metabolism; siroheme biosynthesis; sirohydrochlorin from precorrin-2: step 1/1. Its function is as follows. Multifunctional enzyme that catalyzes the SAM-dependent methylations of uroporphyrinogen III at position C-2 and C-7 to form precorrin-2 via precorrin-1. Then it catalyzes the NAD-dependent ring dehydrogenation of precorrin-2 to yield sirohydrochlorin. Finally, it catalyzes the ferrochelation of sirohydrochlorin to yield siroheme. This is Siroheme synthase from Pseudomonas entomophila (strain L48).